The chain runs to 440 residues: Xylose isomerase (440 aa).

Catalysis depends on residues histidine 99 and aspartate 102. Glutamate 230, glutamate 266, histidine 269, aspartate 294, aspartate 305, aspartate 307, and aspartate 337 together coordinate Mg(2+).

This sequence belongs to the xylose isomerase family. As to quaternary structure, homotetramer. Mg(2+) serves as cofactor.

The protein localises to the cytoplasm. It catalyses the reaction alpha-D-xylose = alpha-D-xylulofuranose. The polypeptide is Xylose isomerase (Halalkalibacterium halodurans (strain ATCC BAA-125 / DSM 18197 / FERM 7344 / JCM 9153 / C-125) (Bacillus halodurans)).